Reading from the N-terminus, the 1092-residue chain is Probable arabinosyltransferase A (1092 aa).

13 consecutive transmembrane segments (helical) span residues 21–43, 214–233, 249–271, 324–346, 353–372, 382–399, 404–426, 517–534, 541–563, 568–590, 602–624, 639–661, and 682–704; these read IARL…VPLL, AVMV…LALL, GLWT…IVGA, VWMR…RCVL, VAAN…AAWL, PLIA…ENSI, LWPA…QGLI, FAVL…MVLL, GAVS…LLIL, WAIQ…AFAF, ALYV…GWFY, IAHY…LAGW, and ALAS…GSMV. The tract at residues 772–798 is disordered; that stretch reads PSGVSEHLEPEPVGTNPGTPNSEGPVD.

Belongs to the emb family.

It is found in the cell membrane. Functionally, arabinosyl transferase responsible for the polymerization of arabinose into the arabinan of arabinogalactan. This is Probable arabinosyltransferase A (embA) from Mycolicibacterium smegmatis (Mycobacterium smegmatis).